The primary structure comprises 501 residues: Glycerol kinase (501 aa).

Threonine 11 is a binding site for ADP. The ATP site is built by threonine 11, threonine 12, and serine 13. Threonine 11 is a binding site for sn-glycerol 3-phosphate. Arginine 15 contributes to the ADP binding site. Residues arginine 81, glutamate 82, tyrosine 133, and aspartate 242 each contribute to the sn-glycerol 3-phosphate site. Glycerol-binding residues include arginine 81, glutamate 82, tyrosine 133, aspartate 242, and glutamine 243. 2 residues coordinate ADP: threonine 264 and glycine 307. 4 residues coordinate ATP: threonine 264, glycine 307, glutamine 311, and glycine 409. Residues glycine 409 and asparagine 413 each coordinate ADP.

This sequence belongs to the FGGY kinase family.

The catalysed reaction is glycerol + ATP = sn-glycerol 3-phosphate + ADP + H(+). Its pathway is polyol metabolism; glycerol degradation via glycerol kinase pathway; sn-glycerol 3-phosphate from glycerol: step 1/1. Inhibited by fructose 1,6-bisphosphate (FBP). Its function is as follows. Key enzyme in the regulation of glycerol uptake and metabolism. Catalyzes the phosphorylation of glycerol to yield sn-glycerol 3-phosphate. In Borrelia garinii subsp. bavariensis (strain ATCC BAA-2496 / DSM 23469 / PBi) (Borreliella bavariensis), this protein is Glycerol kinase.